Consider the following 326-residue polypeptide: MSHQLTFADSEFSSKRRQTRKEIFLSRMEQILPWQNMVEVIEPFYPKAGNGRRPYPLETMLRIHCMQHWYNLSDGAMEDALYEIASMRLFARLSLDSALPDRTTIMNFRHLLEQHQLARQLFKTINRWLAEAGVMMTQGTLVDATIIEAPSSTKNKEQQRDPEMHQTKKGNQWHFGMKAHIGVDAKSGLTHSLVTTAANEHDLNQLGNLLHGEEQFVSADAGYQGAPQREELAEVDVDWLIAERPGKVRTLKQHPRKNKTAINIEYMKASIRAKVEHPFRIIKRQFGFVKARYKGLLKNDNQLAMLFTLANLFRADQMIRQWERSH.

The protein belongs to the transposase 11 family.

In terms of biological role, involved in the transposition of the insertion sequence IS5. The protein is Transposase InsH for insertion sequence element IS5H (insH6) of Escherichia coli (strain K12).